Here is an 801-residue protein sequence, read N- to C-terminus: Growth-differentiation transition protein 7 (801 aa).

The N-terminal stretch at 1–22 (MIKTILIKLILLVIFCYHFLFA) is a signal peptide.

It belongs to the GDT family.

The protein localises to the secreted. The polypeptide is Growth-differentiation transition protein 7 (gdt7) (Dictyostelium discoideum (Social amoeba)).